Reading from the N-terminus, the 675-residue chain is Neurexin-3b-beta (675 aa).

The signal sequence occupies residues 1–30 (MRPHFKTRYPQWLSCMLPLVTGCVFGAVWG). At 31–599 (SNLDSTVVLS…EVIRESSSTT (569 aa)) the chain is on the extracellular side. Positions 81-281 (ATYIFGKGGG…HANIKINGSV (201 aa)) constitute a Laminin G-like domain. 2 disordered regions span residues 313-337 (TTLSTTTTRKQRSPPTIQTTDDIVS) and 490-534 (FKPK…MNNR). Polar residues predominate over residues 325–335 (SPPTIQTTDDI). Residues 600-620 (GMVVGIVSAAALCILILLYAM) form a helical membrane-spanning segment. At 621 to 675 (YKYRNRDEGSYQVDETRNYISNSAQNNGTVVKDKQPSTKGASNKRPKDKDKEYYV) the chain is on the cytoplasmic side. A disordered region spans residues 642–675 (NSAQNNGTVVKDKQPSTKGASNKRPKDKDKEYYV). Residues 665–675 (RPKDKDKEYYV) show a composition bias toward basic and acidic residues.

This sequence belongs to the neurexin family. Processed by alpha-secretase leading to the formation of an extracellular soluble protein as well as a C-terminal membrane-embedded fragment (CTF). Proteolysis of these CTFs by gamma-secretase releases intracellular domains (ICDs) and extracellular peptides.

The protein localises to the membrane. Functionally, neuronal cell surface protein that may be involved in cell recognition and cell adhesion. The protein is Neurexin-3b-beta (nrxn3b) of Danio rerio (Zebrafish).